The sequence spans 149 residues: Urease accessory protein UreE (149 aa).

The protein belongs to the UreE family.

The protein resides in the cytoplasm. Its function is as follows. Involved in urease metallocenter assembly. Binds nickel. Probably functions as a nickel donor during metallocenter assembly. The sequence is that of Urease accessory protein UreE from Prochlorococcus marinus (strain MIT 9312).